The chain runs to 463 residues: Regulator of microtubule dynamics protein 3 (463 aa).

At 1–4 (MSKL) the chain is on the mitochondrial intermembrane side. A helical membrane pass occupies residues 5 to 27 (ILSYRIGLGLVVGAAAGAVIYIV). The Cytoplasmic segment spans residues 28 to 463 (FRRNRKKTRK…PATAEEELLV (436 aa)). The FFAT signature appears at 146 to 161 (IYFTATSGAAHTDAES). Residues 153–192 (GAAHTDAESEGGYSTAYAESDFERESSRASEAEEEDEVSC) form a disordered region. The segment covering 173 to 183 (DFERESSRASE) has biased composition (basic and acidic residues). A coiled-coil region spans residues 279–302 (AEDAQEKKSFASEGKEEAEAALQK).

The protein belongs to the RMDN family. Interacts with PTPN2. Interacts with microtubules. Interacts with VAPB. Interacts (FFAT motif) with MOSPD2 (via MSP domain).

Its subcellular location is the mitochondrion outer membrane. It is found in the cytoplasm. The protein localises to the nucleus. The protein resides in the cytoskeleton. It localises to the spindle. Its subcellular location is the spindle pole. In terms of biological role, involved in cellular calcium homeostasis regulation. The chain is Regulator of microtubule dynamics protein 3 (rmdn3) from Xenopus laevis (African clawed frog).